Consider the following 113-residue polypeptide: Molt-inhibiting hormone (113 aa).

The signal sequence occupies residues 1–35; it reads MMSLAHSKFSCQRTRLLAVVLLAALWSSSLQQAAA. 3 cysteine pairs are disulfide-bonded: Cys-42–Cys-79, Cys-59–Cys-75, and Cys-62–Cys-88.

This sequence belongs to the arthropod CHH/MIH/GIH/VIH hormone family.

It is found in the secreted. Functionally, inhibits Y-organs where molting hormone (ecdysteroid) is secreted. A molting cycle is initiated when MIH secretion diminishes or stops. In Callinectes sapidus (Blue crab), this protein is Molt-inhibiting hormone.